The sequence spans 572 residues: Proline--tRNA ligase (572 aa).

This sequence belongs to the class-II aminoacyl-tRNA synthetase family. ProS type 1 subfamily. As to quaternary structure, homodimer.

The protein localises to the cytoplasm. The enzyme catalyses tRNA(Pro) + L-proline + ATP = L-prolyl-tRNA(Pro) + AMP + diphosphate. In terms of biological role, catalyzes the attachment of proline to tRNA(Pro) in a two-step reaction: proline is first activated by ATP to form Pro-AMP and then transferred to the acceptor end of tRNA(Pro). As ProRS can inadvertently accommodate and process non-cognate amino acids such as alanine and cysteine, to avoid such errors it has two additional distinct editing activities against alanine. One activity is designated as 'pretransfer' editing and involves the tRNA(Pro)-independent hydrolysis of activated Ala-AMP. The other activity is designated 'posttransfer' editing and involves deacylation of mischarged Ala-tRNA(Pro). The misacylated Cys-tRNA(Pro) is not edited by ProRS. This Enterococcus faecalis (strain ATCC 700802 / V583) protein is Proline--tRNA ligase.